The sequence spans 137 residues: Phosphoribosyl-AMP cyclohydrolase (137 aa).

Aspartate 84 contributes to the Mg(2+) binding site. Cysteine 85 contacts Zn(2+). Residues aspartate 86 and aspartate 88 each coordinate Mg(2+). Residues cysteine 101 and cysteine 108 each contribute to the Zn(2+) site.

Belongs to the PRA-CH family. In terms of assembly, homodimer. Mg(2+) is required as a cofactor. Requires Zn(2+) as cofactor.

The protein resides in the cytoplasm. The catalysed reaction is 1-(5-phospho-beta-D-ribosyl)-5'-AMP + H2O = 1-(5-phospho-beta-D-ribosyl)-5-[(5-phospho-beta-D-ribosylamino)methylideneamino]imidazole-4-carboxamide. It functions in the pathway amino-acid biosynthesis; L-histidine biosynthesis; L-histidine from 5-phospho-alpha-D-ribose 1-diphosphate: step 3/9. Functionally, catalyzes the hydrolysis of the adenine ring of phosphoribosyl-AMP. This is Phosphoribosyl-AMP cyclohydrolase from Prosthecochloris aestuarii (strain DSM 271 / SK 413).